Reading from the N-terminus, the 563-residue chain is Arginine--tRNA ligase (563 aa).

The short motif at 121 to 131 is the 'HIGH' region element; the sequence is PNIAKPFSIGH.

The protein belongs to the class-I aminoacyl-tRNA synthetase family. Monomer.

Its subcellular location is the cytoplasm. The catalysed reaction is tRNA(Arg) + L-arginine + ATP = L-arginyl-tRNA(Arg) + AMP + diphosphate. The chain is Arginine--tRNA ligase from Streptococcus pyogenes serotype M6 (strain ATCC BAA-946 / MGAS10394).